A 391-amino-acid chain; its full sequence is S-adenosylmethionine synthase (391 aa).

Residue histidine 14 coordinates ATP. Aspartate 16 serves as a coordination point for Mg(2+). Residue glutamate 42 coordinates K(+). Residues glutamate 55 and glutamine 98 each contribute to the L-methionine site. The segment at 98-108 (QSVDIAMGVDE) is flexible loop. ATP is bound by residues 172–174 (DGK), 238–239 (RF), aspartate 247, 253–254 (RK), alanine 270, and lysine 274. Aspartate 247 is a binding site for L-methionine. Lysine 278 provides a ligand contact to L-methionine.

This sequence belongs to the AdoMet synthase family. As to quaternary structure, homotetramer; dimer of dimers. Mg(2+) serves as cofactor. Requires K(+) as cofactor.

The protein resides in the cytoplasm. It carries out the reaction L-methionine + ATP + H2O = S-adenosyl-L-methionine + phosphate + diphosphate. It participates in amino-acid biosynthesis; S-adenosyl-L-methionine biosynthesis; S-adenosyl-L-methionine from L-methionine: step 1/1. Catalyzes the formation of S-adenosylmethionine (AdoMet) from methionine and ATP. The overall synthetic reaction is composed of two sequential steps, AdoMet formation and the subsequent tripolyphosphate hydrolysis which occurs prior to release of AdoMet from the enzyme. The sequence is that of S-adenosylmethionine synthase from Clostridium botulinum (strain Hall / ATCC 3502 / NCTC 13319 / Type A).